We begin with the raw amino-acid sequence, 338 residues long: uncharacterized protein (338 aa).

Belongs to the MG032/MG096/MG288 family.

This is an uncharacterized protein from Mycoplasma pneumoniae (strain ATCC 29342 / M129 / Subtype 1) (Mycoplasmoides pneumoniae).